The sequence spans 211 residues: Protein-L-isoaspartate O-methyltransferase 1 (211 aa).

Residue S62 is part of the active site.

It belongs to the methyltransferase superfamily. L-isoaspartyl/D-aspartyl protein methyltransferase family.

It is found in the cytoplasm. It catalyses the reaction [protein]-L-isoaspartate + S-adenosyl-L-methionine = [protein]-L-isoaspartate alpha-methyl ester + S-adenosyl-L-homocysteine. In terms of biological role, catalyzes the methyl esterification of L-isoaspartyl residues in peptides and proteins that result from spontaneous decomposition of normal L-aspartyl and L-asparaginyl residues. It plays a role in the repair and/or degradation of damaged proteins. This is Protein-L-isoaspartate O-methyltransferase 1 from Shewanella sediminis (strain HAW-EB3).